We begin with the raw amino-acid sequence, 240 residues long: Myomodulin neuropeptides 2 (240 aa).

The first 23 residues, Met-1–Ala-23, serve as a signal peptide directing secretion. Residues Ala-23 to Arg-44 form a disordered region. A propeptide spanning residues Gln-24–Arg-44 is cleaved from the precursor. Residues Glu-26 to Ala-41 are compositionally biased toward polar residues. A leucine amide mark is found at Leu-51 and Leu-60. Propeptides (connecting peptide) lie at residues Ser-72 to Ala-81 and Gly-84 to Ser-112. Ala-81 bears the Alanine amide mark. Pyrrolidone carboxylic acid is present on Gln-115. Tyr-121 carries the post-translational modification Tyrosine amide. Propeptides (connecting peptide) lie at residues Asp-124 to Asp-147, Asp-124 to Leu-148, Asp-124 to Leu-149, Asp-124 to Tyr-168, Asp-131 to Tyr-168, Leu-149 to Tyr-168, Ser-150 to Tyr-168, Ser-151 to Tyr-168, Ser-171 to Ser-190, and Ser-171 to Ser-199. Ile-207 bears the Isoleucine amide mark. A propeptide spanning residues Phe-210–Lys-219 is cleaved from the precursor. The disordered stretch occupies residues Gly-212–Glu-240. An Isoleucine amide modification is found at Ile-226. A propeptide spanning residues Gly-227 to Glu-240 is cleaved from the precursor. Positions Gly-227–Glu-240 are enriched in basic and acidic residues.

As to expression, expressed in the pedal-buccal projection neurons in the pedal ganglion.

It localises to the secreted. MMG2-DPs (Myomodulin gene 2-derived peptides) bias egestive feeding programs toward ingestive ones, and modulate accessory radula closer (ARC) muscle contractions. The chain is Myomodulin neuropeptides 2 (MMG2) from Aplysia californica (California sea hare).